The primary structure comprises 189 residues: MFDEQAIKQSVQNILVAIGEDPDREGLKETPRRVAQMYTELFSGMNQDPAEVLRVGYELGHREMVIIKDIPFYSMCEHHLLPFSGVVHIGYIPNIDGRVVGISKLARVVEIYAKRPQIQERMATQIADAIMDGLKCDGVAVVIEAEHMCMVMRGIKKPGSRVITSALRGSFHKSPAARAEFLSLIQHKG.

Residues C76, H79, and C149 each coordinate Zn(2+).

Belongs to the GTP cyclohydrolase I family. As to quaternary structure, homomer.

The catalysed reaction is GTP + H2O = 7,8-dihydroneopterin 3'-triphosphate + formate + H(+). It functions in the pathway cofactor biosynthesis; 7,8-dihydroneopterin triphosphate biosynthesis; 7,8-dihydroneopterin triphosphate from GTP: step 1/1. In Dehalococcoides mccartyi (strain ATCC BAA-2100 / JCM 16839 / KCTC 5957 / BAV1), this protein is GTP cyclohydrolase 1.